The sequence spans 552 residues: MSLSRSEEMHRLTENVYKTIMEQFNPSLRNFIAMGKNYEKALAGVTYAAKGYFDALVKMGELASESQGSKELGDVLFQMAEVHRQIQNQLEEMLKSFHNELLTQLEQKVELDSRYLSAALKKYQTEQRSKGDALDKCQAELKKLRKKSQGSKNPQKYSDKELQYIDAISNKQGELENYVSDGYKTALTEERRRFCFLVEKQCAVAKNSAAYHSKGKELLAQKLPLWQQACADPSKIPERAVQLMQQVASNGATLPSALSASKSNLVISDPIPGAKPLPVPPELAPFVGRMSAQESTPIMNGVTGPDGEDYSPWADRKAAQPKSLSPPQSQSKLSDSYSNTLPVRKSVTPKNSYATTENKTLPRSSSMAAGLERNGRMRVKAIFSHAAGDNSTLLSFKEGDLITLLVPEARDGWHYGESEKTKMRGWFPFSYTRVLDSDGSDRLHMSLQQGKSSSTGNLLDKDDLAIPPPDYGAASRAFPAQTASGFKQRPYSVAVPAFSQGLDDYGARSMSRNPFAHVQLKPTVTNDRCDLSAQGPEGREHGDGSARTLAGR.

The 250-residue stretch at 1–250 (MSLSRSEEMH…VQLMQQVASN (250 aa)) folds into the IMD domain. A coiled-coil region spans residues 132–153 (DALDKCQAELKKLRKKSQGSKN). At S261 the chain carries Phosphoserine. Residues 295–369 (STPIMNGVTG…TLPRSSSMAA (75 aa)) form a disordered region. T296 carries the post-translational modification Phosphothreonine. The span at 320–334 (QPKSLSPPQSQSKLS) shows a compositional bias: low complexity. S323, S325, and S336 each carry phosphoserine. At T340 the chain carries Phosphothreonine. S346 bears the Phosphoserine mark. Positions 348 to 367 (TPKNSYATTENKTLPRSSSM) are enriched in polar residues. Phosphothreonine is present on T360. A phosphoserine mark is found at S366, S384, S395, and S454. In terms of domain architecture, SH3 spans 374–437 (NGRMRVKAIF…PFSYTRVLDS (64 aa)). Residues 447 to 457 (LQQGKSSSTGN) are compositionally biased toward polar residues. 2 disordered regions span residues 447 to 466 (LQQG…DLAI) and 525 to 552 (TNDR…LAGR).

As to quaternary structure, homodimer. Interacts with CDC42 and RAC1 that have been activated by GTP binding. Interacts with ATN1, ADGRB1, EPS8, SHANK1, SHANK2, SHANK3, WASF1 and WASF2. Interacts with ENAH after recruitment of CDC42. Interacts with TIAM1 and DIAPH1. Interacts (via SH3 domain) with E.coli effector protein EspF(U) (via PXXP motifs). Interacts with E.coli intimin receptor Tir. Phosphorylated on tyrosine residues by INSR in response to insulin treatment. Isoform 1 and isoform 4 are expressed almost exclusively in brain. Isoform 4 is barely detectable in placenta, prostate and testis. A short isoform is ubiquitous, with the highest expression in liver, prostate, testis and placenta.

The protein localises to the cytoplasm. The protein resides in the membrane. Its subcellular location is the cell projection. It is found in the filopodium. It localises to the ruffle. The protein localises to the cytoskeleton. Adapter protein that links membrane-bound small G-proteins to cytoplasmic effector proteins. Necessary for CDC42-mediated reorganization of the actin cytoskeleton and for RAC1-mediated membrane ruffling. Involved in the regulation of the actin cytoskeleton by WASF family members and the Arp2/3 complex. Plays a role in neurite growth. Acts syngeristically with ENAH to promote filipodia formation. Plays a role in the reorganization of the actin cytoskeleton in response to bacterial infection. Participates in actin bundling when associated with EPS8, promoting filopodial protrusions. In Homo sapiens (Human), this protein is BAR/IMD domain-containing adapter protein 2 (BAIAP2).